Here is a 184-residue protein sequence, read N- to C-terminus: Large ribosomal subunit protein uL6 (184 aa).

It belongs to the universal ribosomal protein uL6 family. As to quaternary structure, part of the 50S ribosomal subunit.

This protein binds to the 23S rRNA, and is important in its secondary structure. It is located near the subunit interface in the base of the L7/L12 stalk, and near the tRNA binding site of the peptidyltransferase center. This chain is Large ribosomal subunit protein uL6, found in Thermococcus kodakarensis (strain ATCC BAA-918 / JCM 12380 / KOD1) (Pyrococcus kodakaraensis (strain KOD1)).